The following is a 421-amino-acid chain: Serine--tRNA ligase (421 aa).

230 to 232 (TAE) is a binding site for L-serine. Residue 259–261 (RRE) participates in ATP binding. Glutamate 282 contributes to the L-serine binding site. Position 346–349 (346–349 (EISS)) interacts with ATP. Residue serine 380 coordinates L-serine.

It belongs to the class-II aminoacyl-tRNA synthetase family. Type-1 seryl-tRNA synthetase subfamily. In terms of assembly, homodimer. The tRNA molecule binds across the dimer.

Its subcellular location is the cytoplasm. The catalysed reaction is tRNA(Ser) + L-serine + ATP = L-seryl-tRNA(Ser) + AMP + diphosphate + H(+). It catalyses the reaction tRNA(Sec) + L-serine + ATP = L-seryl-tRNA(Sec) + AMP + diphosphate + H(+). Its pathway is aminoacyl-tRNA biosynthesis; selenocysteinyl-tRNA(Sec) biosynthesis; L-seryl-tRNA(Sec) from L-serine and tRNA(Sec): step 1/1. In terms of biological role, catalyzes the attachment of serine to tRNA(Ser). Is also able to aminoacylate tRNA(Sec) with serine, to form the misacylated tRNA L-seryl-tRNA(Sec), which will be further converted into selenocysteinyl-tRNA(Sec). The chain is Serine--tRNA ligase from Methanosarcina acetivorans (strain ATCC 35395 / DSM 2834 / JCM 12185 / C2A).